The chain runs to 470 residues: 6-phospho-beta-galactosidase 1 (470 aa).

Residues glutamine 23, histidine 120, asparagine 163, glutamate 164, and asparagine 300 each coordinate D-galactose 6-phosphate. Glutamate 164 acts as the Proton donor in catalysis. Glutamate 378 serves as the catalytic Nucleophile. Residues serine 434, tryptophan 435, lysine 441, and tyrosine 443 each contribute to the D-galactose 6-phosphate site.

Belongs to the glycosyl hydrolase 1 family.

The catalysed reaction is a 6-phospho-beta-D-galactoside + H2O = D-galactose 6-phosphate + an alcohol. The protein operates within carbohydrate metabolism; lactose degradation; D-galactose 6-phosphate and beta-D-glucose from lactose 6-phosphate: step 1/1. In Streptococcus pneumoniae (strain ATCC BAA-255 / R6), this protein is 6-phospho-beta-galactosidase 1.